The chain runs to 775 residues: MLQDSITGIVNSFNLFFPSTMSRPTLMPTCVAFCSILFLTLATGCQAFPKVERRETAQEYAEKEQSQKMNTDDQENISFAPKYMLQQMSSEAPMVLSEGPSEIPLIKVFSVNKESHLPGAGLLHPTSPGVYSSSEPVVSASEQEPGPSLLERMSSEHSLSKVMLTVAVSSPASLNPDQEGPYNSLSTQPIVAAVTDVTHGSLDYLDNQLFAAKSQEAVSLGNSPSSSINTKEPEIIKADAAMGTTVVPGVDSTGDMEPDRERPSEMAADDGQSTTTKYLVTIPNNFLTTEPTAGSILGDAKVTVSVSTAGPVSSIFNEEWDDTKFESISRGRPPEPGDNAETQMRTKPPHGTYESFEGTEESPSSTAVLKVAPGHLGGEPALGTALVTALGDERSPVLTHQISFTPMSLAEDPEVSTMKLFPSAGGFRASTQGDRTQLSSETAFSTSQYESVPQQEAGNVLKDITQERKMATQAMNTTSPVVTQEHMATIEVPRGSGEPEEGMPSLSPVPAEVADAELSRRGESLATPASTTVVPLSLKLTSSMEDLMDTITGPSEEFIPVLGSPMAPPAMTVEAPTISSALPSEGRTSPSISRPNTAASYGLEQLESEEVEDDEDEEDEEDEEEEEEDEEDEEDEEDKETDSLYKDFDGDTEPPGFTLPGITSQEPDIRSGSMDLLEVATYQVPETIEWEQQNQGLVRSWMEKLKDKAGYMSGMLVPVGVGIAGALFILGALYSIKVMNRRRRNGFKRHKRKQREFNSMQDRVMLLADSSEDEF.

The signal sequence occupies residues 1–47 (MLQDSITGIVNSFNLFFPSTMSRPTLMPTCVAFCSILFLTLATGCQA). The Extracellular portion of the chain corresponds to 48 to 715 (FPKVERRETA…KDKAGYMSGM (668 aa)). Residue Asn-76 is glycosylated (N-linked (GlcNAc...) asparagine). Disordered stretches follow at residues 120 to 148 (AGLL…PGPS), 247 to 273 (VPGV…DGQS), and 324 to 366 (KFES…PSST). Residues 129–142 (GVYSSSEPVVSASE) show a composition bias toward polar residues. Over residues 324 to 335 (KFESISRGRPPE) the composition is skewed to basic and acidic residues. N-linked (GlcNAc...) asparagine glycosylation is present at Asn-476. The interval 559–669 (IPVLGSPMAP…PGITSQEPDI (111 aa)) is disordered. Positions 577–599 (TISSALPSEGRTSPSISRPNTAA) are enriched in polar residues. The span at 606–640 (LESEEVEDDEDEEDEEDEEEEEEDEEDEEDEEDKE) shows a compositional bias: acidic residues. The helical transmembrane segment at 716–736 (LVPVGVGIAGALFILGALYSI) threads the bilayer. The Cytoplasmic portion of the chain corresponds to 737–775 (KVMNRRRRNGFKRHKRKQREFNSMQDRVMLLADSSEDEF). Phosphoserine is present on residues Ser-770 and Ser-771.

Interacts with IL6ST; this interaction prevents IL6ST protein homodimerization and bridges ARMH4 with IL6R and STAT3 and therefore inhibits phosphorylation of STAT3 at 'Tyr-705'. Interacts (via cytoplasmic tail) with RICTOR; this interaction bridges ARMH4 to the mTORC2 complex and inhibits the mTORC2 kinase activity. As to expression, expressed in bone-marroew cells.

The protein resides in the membrane. Its function is as follows. May modulate immune response and may play a role in inflammation. Down-modulates STAT3 signaling throught direct interaction with IL6ST, resulting in the inhibition of phosphorylation of STAT3 at 'Tyr-705'. May negatively regulates AKT signaling by modulating the activity of mTORC2 complex through RICTOR interaction. The sequence is that of Armadillo-like helical domain-containing protein 4 from Mus musculus (Mouse).